The chain runs to 452 residues: UPF0210 protein PTH_0987 (452 aa).

It belongs to the UPF0210 family. As to quaternary structure, homodimer.

This chain is UPF0210 protein PTH_0987, found in Pelotomaculum thermopropionicum (strain DSM 13744 / JCM 10971 / SI).